Consider the following 957-residue polypeptide: Bifunctional glutamine synthetase adenylyltransferase/adenylyl-removing enzyme (957 aa).

Positions M1–E449 are adenylyl removase. Positions S457–E957 are adenylyl transferase.

This sequence belongs to the GlnE family. Requires Mg(2+) as cofactor.

The enzyme catalyses [glutamine synthetase]-O(4)-(5'-adenylyl)-L-tyrosine + phosphate = [glutamine synthetase]-L-tyrosine + ADP. It catalyses the reaction [glutamine synthetase]-L-tyrosine + ATP = [glutamine synthetase]-O(4)-(5'-adenylyl)-L-tyrosine + diphosphate. Functionally, involved in the regulation of glutamine synthetase GlnA, a key enzyme in the process to assimilate ammonia. When cellular nitrogen levels are high, the C-terminal adenylyl transferase (AT) inactivates GlnA by covalent transfer of an adenylyl group from ATP to specific tyrosine residue of GlnA, thus reducing its activity. Conversely, when nitrogen levels are low, the N-terminal adenylyl removase (AR) activates GlnA by removing the adenylyl group by phosphorolysis, increasing its activity. The regulatory region of GlnE binds the signal transduction protein PII (GlnB) which indicates the nitrogen status of the cell. This Photobacterium profundum (strain SS9) protein is Bifunctional glutamine synthetase adenylyltransferase/adenylyl-removing enzyme.